Here is a 217-residue protein sequence, read N- to C-terminus: 5'-methylthioadenosine/S-adenosylhomocysteine nucleosidase (217 aa).

Catalysis depends on Glu11, which acts as the Proton acceptor. Substrate-binding positions include Gly77, Val139, and 159-160 (MD). Asp183 (proton donor) is an active-site residue.

Belongs to the PNP/UDP phosphorylase family. MtnN subfamily.

The catalysed reaction is S-adenosyl-L-homocysteine + H2O = S-(5-deoxy-D-ribos-5-yl)-L-homocysteine + adenine. It catalyses the reaction S-methyl-5'-thioadenosine + H2O = 5-(methylsulfanyl)-D-ribose + adenine. The enzyme catalyses 5'-deoxyadenosine + H2O = 5-deoxy-D-ribose + adenine. The protein operates within amino-acid biosynthesis; L-methionine biosynthesis via salvage pathway; S-methyl-5-thio-alpha-D-ribose 1-phosphate from S-methyl-5'-thioadenosine (hydrolase route): step 1/2. In terms of biological role, catalyzes the irreversible cleavage of the glycosidic bond in both 5'-methylthioadenosine (MTA) and S-adenosylhomocysteine (SAH/AdoHcy) to adenine and the corresponding thioribose, 5'-methylthioribose and S-ribosylhomocysteine, respectively. Also cleaves 5'-deoxyadenosine, a toxic by-product of radical S-adenosylmethionine (SAM) enzymes, into 5-deoxyribose and adenine. The sequence is that of 5'-methylthioadenosine/S-adenosylhomocysteine nucleosidase (mtnN) from Thermotoga maritima (strain ATCC 43589 / DSM 3109 / JCM 10099 / NBRC 100826 / MSB8).